A 214-amino-acid chain; its full sequence is Charged multivesicular body protein 2b (214 aa).

The stretch at 16–55 (EQNKELRGTQRAITRDRAALEKQEKQLEMEIKKMAKAGNK) forms a coiled coil. The disordered stretch occupies residues 178–203 (MAKAPSAAKGLPSTSASKSSGISDEE). The span at 189 to 199 (PSTSASKSSGI) shows a compositional bias: polar residues. Residues 202–212 (EEIERQLKALG) carry the MIT-interacting motif motif.

The protein belongs to the SNF7 family. Probable core component of the endosomal sorting required for transport complex III (ESCRT-III). ESCRT-III components are thought to multimerize to form a flat lattice on the perimeter membrane of the endosome.

The protein localises to the cytoplasm. It is found in the cytosol. It localises to the late endosome membrane. In terms of biological role, probable core component of the endosomal sorting required for transport complex III (ESCRT-III) which is involved in multivesicular bodies (MVBs) formation and sorting of endosomal cargo proteins into MVBs. MVBs contain intraluminal vesicles (ILVs) that are generated by invagination and scission from the limiting membrane of the endosome and mostly are delivered to lysosomes enabling degradation of membrane proteins, such as stimulated growth factor receptors, lysosomal enzymes and lipids. The polypeptide is Charged multivesicular body protein 2b (chmp2b) (Xenopus tropicalis (Western clawed frog)).